The sequence spans 500 residues: NAD(P)H-quinone oxidoreductase chain 4, chloroplastic (500 aa).

14 consecutive transmembrane segments (helical) span residues 4 to 24 (FPWL…IFFL), 37 to 57 (ICIC…HFQL), 87 to 107 (IGPI…AWPV), 113 to 130 (LFHF…GLFS), 134 to 154 (LLLF…LLSM), 167 to 187 (FILY…GMGL), 211 to 231 (ILFY…IPLH), 242 to 262 (HYST…YGLV), 272 to 292 (AHSI…IYAA), 305 to 325 (IAYS…SITD), 330 to 350 (GAIL…FLAG), 386 to 406 (LALP…GIIT), 416 to 436 (ILIT…LLSM), and 462 to 482 (LFVS…PDFV).

Belongs to the complex I subunit 4 family.

It is found in the plastid. It localises to the chloroplast thylakoid membrane. The enzyme catalyses a plastoquinone + NADH + (n+1) H(+)(in) = a plastoquinol + NAD(+) + n H(+)(out). It catalyses the reaction a plastoquinone + NADPH + (n+1) H(+)(in) = a plastoquinol + NADP(+) + n H(+)(out). The chain is NAD(P)H-quinone oxidoreductase chain 4, chloroplastic from Acorus calamus var. americanus (American sweet flag).